A 481-amino-acid polypeptide reads, in one-letter code: Aspartyl/glutamyl-tRNA(Asn/Gln) amidotransferase subunit B (481 aa).

This sequence belongs to the GatB/GatE family. GatB subfamily. In terms of assembly, heterotrimer of A, B and C subunits.

It catalyses the reaction L-glutamyl-tRNA(Gln) + L-glutamine + ATP + H2O = L-glutaminyl-tRNA(Gln) + L-glutamate + ADP + phosphate + H(+). The catalysed reaction is L-aspartyl-tRNA(Asn) + L-glutamine + ATP + H2O = L-asparaginyl-tRNA(Asn) + L-glutamate + ADP + phosphate + 2 H(+). Its function is as follows. Allows the formation of correctly charged Asn-tRNA(Asn) or Gln-tRNA(Gln) through the transamidation of misacylated Asp-tRNA(Asn) or Glu-tRNA(Gln) in organisms which lack either or both of asparaginyl-tRNA or glutaminyl-tRNA synthetases. The reaction takes place in the presence of glutamine and ATP through an activated phospho-Asp-tRNA(Asn) or phospho-Glu-tRNA(Gln). This Pseudomonas savastanoi pv. phaseolicola (strain 1448A / Race 6) (Pseudomonas syringae pv. phaseolicola (strain 1448A / Race 6)) protein is Aspartyl/glutamyl-tRNA(Asn/Gln) amidotransferase subunit B.